We begin with the raw amino-acid sequence, 804 residues long: Type 2 DNA topoisomerase 6 subunit B (804 aa).

Residues N58, D89, 110 to 111, 120 to 127, and K629 contribute to the ATP site; these read SR and GQQGIGIS.

This sequence belongs to the TOP6B family. As to quaternary structure, homodimer. Heterotetramer of two Top6A and two Top6B chains.

It carries out the reaction ATP-dependent breakage, passage and rejoining of double-stranded DNA.. Relaxes both positive and negative superturns and exhibits a strong decatenase activity. The polypeptide is Type 2 DNA topoisomerase 6 subunit B (Halobacterium salinarum (strain ATCC 29341 / DSM 671 / R1)).